The sequence spans 305 residues: tRNA uridine(34) hydroxylase (305 aa).

A Rhodanese domain is found at 126–220 (CDPEVTVIDT…YLEEVPAQES (95 aa)). Catalysis depends on Cys-180, which acts as the Cysteine persulfide intermediate.

This sequence belongs to the TrhO family.

The enzyme catalyses uridine(34) in tRNA + AH2 + O2 = 5-hydroxyuridine(34) in tRNA + A + H2O. In terms of biological role, catalyzes oxygen-dependent 5-hydroxyuridine (ho5U) modification at position 34 in tRNAs. The polypeptide is tRNA uridine(34) hydroxylase (Nostoc punctiforme (strain ATCC 29133 / PCC 73102)).